A 344-amino-acid chain; its full sequence is [LysW]-L-2-aminoadipate 6-phosphate reductase (344 aa).

Residues 12 to 15 (SGYA), 36 to 38 (SRR), and Leu75 contribute to the NADP(+) site. Cys148 is an active-site residue. Residues Ser180, Ala184, and Asn312 each contribute to the NADP(+) site.

The protein belongs to the NAGSA dehydrogenase family. Type 1 subfamily. LysY sub-subfamily. Homotetramer. Interacts with LysW. May form a ternary complex with LysW and LysZ.

The protein resides in the cytoplasm. It catalyses the reaction [amino-group carrier protein]-C-terminal-N-(1-carboxy-5-oxopentan-1-yl)-L-glutamine + phosphate + NADP(+) = [amino-group carrier protein]-C-terminal-N-(1-carboxy-5-phosphooxy-5-oxopentan-1-yl)-L-glutamine + NADPH + H(+). Its pathway is amino-acid biosynthesis; L-lysine biosynthesis via AAA pathway; L-lysine from L-alpha-aminoadipate (Thermus route): step 3/5. In terms of biological role, catalyzes the NADPH-dependent reduction of [LysW]-aminoadipate 6-phosphate to yield [LysW]-aminoadipate 6-semialdehyde. The sequence is that of [LysW]-L-2-aminoadipate 6-phosphate reductase from Thermus thermophilus (strain ATCC BAA-163 / DSM 7039 / HB27).